Consider the following 258-residue polypeptide: Indole-3-glycerol phosphate synthase (258 aa).

The protein belongs to the TrpC family.

It carries out the reaction 1-(2-carboxyphenylamino)-1-deoxy-D-ribulose 5-phosphate + H(+) = (1S,2R)-1-C-(indol-3-yl)glycerol 3-phosphate + CO2 + H2O. The protein operates within amino-acid biosynthesis; L-tryptophan biosynthesis; L-tryptophan from chorismate: step 4/5. This Chlorobium phaeovibrioides (strain DSM 265 / 1930) (Prosthecochloris vibrioformis (strain DSM 265)) protein is Indole-3-glycerol phosphate synthase.